Consider the following 252-residue polypeptide: uncharacterized protein (252 aa).

The first 20 residues, 1-20 (MIATLGNLIIPVIFVNYVAS), serve as a signal peptide directing secretion.

The protein belongs to the ascovirus HvAV ORF17 family.

This is an uncharacterized protein from Spodoptera frugiperda ascovirus 1a (SfAV-1a).